The chain runs to 474 residues: UDP-N-acetylmuramate--L-alanine ligase (474 aa).

Position 115-121 (115-121) interacts with ATP; that stretch reads GTHGKTT.

This sequence belongs to the MurCDEF family.

It is found in the cytoplasm. The catalysed reaction is UDP-N-acetyl-alpha-D-muramate + L-alanine + ATP = UDP-N-acetyl-alpha-D-muramoyl-L-alanine + ADP + phosphate + H(+). It participates in cell wall biogenesis; peptidoglycan biosynthesis. In terms of biological role, cell wall formation. This chain is UDP-N-acetylmuramate--L-alanine ligase, found in Novosphingobium aromaticivorans (strain ATCC 700278 / DSM 12444 / CCUG 56034 / CIP 105152 / NBRC 16084 / F199).